Consider the following 670-residue polypeptide: MGETEKRIETHRIRCLSKLKMFLLAITCAFVSKTLSGSYMNSMLTQIERQFNIPTSLVGFINGSFEIGNLLLIIFVSYFGTKLHRPIMIGIGCVVMGLGCFLKSLPHFLMNQYEYESTVSVSGNLSSNSFLCMENGTQILRPTQDPSECTKEVKSLMWVYVLVGNIVRGMGETPILPLGISYIEDFAKFENSPLYIGLVETGAIIGPLIGLLLASFCANVYVDTGFVNTDDLIITPTDTRWVGAWWFGFLICAGVNVLTAIPFFFLPNTLPKEGLETNADIIKNENEDKQKEEVKKEKYGITKDFLPFMKSLSCNPIYMLFILVSVIQFNAFVNMISFMPKYLEQQYGISSSDAIFLMGIYNLPPICIGYIIGGLIMKKFKITVKQAAHIGCWLSLLEYLLYFLSFLMTCENSSVVGINTSYEGIPQDLYVENDIFADCNVDCNCPSKIWDPVCGNNGLSYLSACLAGCETSIGTGINMVFQNCSCIQTSGNSSAVLGLCDKGPDCSLMLQYFLILSAMSSFIYSLAAIPGYMVLLRCMKSEEKSLGVGLHTFCTRVFAGIPAPIYFGALMDSTCLHWGTLKCGESGACRIYDSTTFRYIYLGLPAALRGSSFVPALIILILLRKCHLPGENASSGTELIETKVKGKENECKDIYQKSTVLKDDELKTKL.

Topologically, residues 1 to 20 (MGETEKRIETHRIRCLSKLK) are cytoplasmic. The chain crosses the membrane as a helical span at residues 21–40 (MFLLAITCAFVSKTLSGSYM). Residues 41 to 59 (NSMLTQIERQFNIPTSLVG) lie on the Extracellular side of the membrane. A helical transmembrane segment spans residues 60–80 (FINGSFEIGNLLLIIFVSYFG). Topologically, residues 81-86 (TKLHRP) are cytoplasmic. The chain crosses the membrane as a helical span at residues 87–111 (IMIGIGCVVMGLGCFLKSLPHFLMN). Residues 112–155 (QYEYESTVSVSGNLSSNSFLCMENGTQILRPTQDPSECTKEVKS) lie on the Extracellular side of the membrane. Residues Asn-124 and Asn-135 are each glycosylated (N-linked (GlcNAc...) asparagine). A helical membrane pass occupies residues 156–184 (LMWVYVLVGNIVRGMGETPILPLGISYIE). Over 185–203 (DFAKFENSPLYIGLVETGA) the chain is Cytoplasmic. Residues 204-224 (IIGPLIGLLLASFCANVYVDT) traverse the membrane as a helical segment. Residues 225 to 242 (GFVNTDDLIITPTDTRWV) lie on the Extracellular side of the membrane. Residues 243–267 (GAWWFGFLICAGVNVLTAIPFFFLP) traverse the membrane as a helical segment. At 268 to 311 (NTLPKEGLETNADIIKNENEDKQKEEVKKEKYGITKDFLPFMKS) the chain is on the cytoplasmic side. The chain crosses the membrane as a helical span at residues 312 to 333 (LSCNPIYMLFILVSVIQFNAFV). The Extracellular portion of the chain corresponds to 334 to 353 (NMISFMPKYLEQQYGISSSD). Residues 354-377 (AIFLMGIYNLPPICIGYIIGGLIM) traverse the membrane as a helical segment. Over 378-381 (KKFK) the chain is Cytoplasmic. The helical transmembrane segment at 382–405 (ITVKQAAHIGCWLSLLEYLLYFLS) threads the bilayer. Residues 406–513 (FLMTCENSSV…PDCSLMLQYF (108 aa)) are Extracellular-facing. Asn-412 and Asn-419 each carry an N-linked (GlcNAc...) asparagine glycan. In terms of domain architecture, Kazal-like spans 433-488 (NDIFADCNVDCNCPSKIWDPVCGNNGLSYLSACLAGCETSIGTGINMVFQNCSCIQ). 3 disulfides stabilise this stretch: Cys-439-Cys-469, Cys-445-Cys-465, and Cys-454-Cys-486. A helical membrane pass occupies residues 514–536 (LILSAMSSFIYSLAAIPGYMVLL). Residues 537 to 545 (RCMKSEEKS) lie on the Cytoplasmic side of the membrane. The helical transmembrane segment at 546 to 571 (LGVGLHTFCTRVFAGIPAPIYFGALM) threads the bilayer. Residues 572-605 (DSTCLHWGTLKCGESGACRIYDSTTFRYIYLGLP) lie on the Extracellular side of the membrane. Residues 606–623 (AALRGSSFVPALIILILL) form a helical membrane-spanning segment. The Cytoplasmic segment spans residues 624 to 670 (RKCHLPGENASSGTELIETKVKGKENECKDIYQKSTVLKDDELKTKL).

Belongs to the organo anion transporter (TC 2.A.60) family. As to expression, higher expression in the brain than in liver and kidney. Expressed in brain neurons in both cortex and hippocampus. Expressed in placental trophoblasts. Also expressed in lung and testes at lower levels. Expressed in the eye (at protein level). Expressed in the retina in the outer and inner nuclear layers, the inner plexiform layer and the ganglion cell layer. Expressed in liver and prostate. In testis, primarily localized to the basal membrane of Sertoli cells and weakly expressed in Leydig cells and within the tubules. Expressed in fetal brain and liver.

It localises to the cell membrane. It is found in the basal cell membrane. It carries out the reaction taurocholate(out) = taurocholate(in). The catalysed reaction is glycocholate(out) = glycocholate(in). The enzyme catalyses taurochenodeoxycholate(out) = taurochenodeoxycholate(in). It catalyses the reaction tauroursodeoxycholate(out) = tauroursodeoxycholate(in). It carries out the reaction dehydroepiandrosterone 3-sulfate(out) = dehydroepiandrosterone 3-sulfate(in). The catalysed reaction is estrone 3-sulfate(out) = estrone 3-sulfate(in). The enzyme catalyses 3,3',5'-triiodo-L-thyronine(out) = 3,3',5'-triiodo-L-thyronine(in). It catalyses the reaction L-thyroxine(out) = L-thyroxine(in). It carries out the reaction taurodeoxycholate(out) = taurodeoxycholate(in). The catalysed reaction is glycodeoxycholate(out) = glycodeoxycholate(in). The enzyme catalyses glycochenodeoxycholate(out) = glycochenodeoxycholate(in). It catalyses the reaction glycoursodeoxycholate(out) = glycoursodeoxycholate(in). It carries out the reaction 17beta-estradiol 17-O-(beta-D-glucuronate)(out) = 17beta-estradiol 17-O-(beta-D-glucuronate)(in). The catalysed reaction is prostaglandin E2(out) = prostaglandin E2(in). The enzyme catalyses substance P(out) = substance P(in). Its activity is regulated as follows. Transport activity is inhibited by the grapefruit juice component naringin. Functionally, na(+)-independent transporter that mediates the cellular uptake of a broad range of organic anions such as the endogenous bile salts cholate and deoxycholate, either in their unconjugated or conjugated forms (taurocholate and glycocholate), at the plasmam membrane. Responsible for intestinal absorption of bile acids. Transports dehydroepiandrosterone 3-sulfate (DHEAS), a major circulating steroid secreted by the adrenal cortex, as well as estrone 3-sulfate and 17beta-estradiol 17-O-(beta-D-glucuronate). Mediates apical uptake of all-trans-retinol (atROL) across human retinal pigment epithelium, which is essential to maintaining the integrity of the visual cycle and thus vision. Involved in the uptake of clinically used drugs. Capable of thyroid hormone transport (both T3 or 3,3',5'-triiodo-L-thyronine, and T4 or L-tyroxine). Also transports prostaglandin E2. Plays roles in blood-brain and -cerebrospinal fluid barrier transport of organic anions and signal mediators, and in hormone uptake by neural cells. May also play a role in the reuptake of neuropeptides such as substance P/TAC1 and vasoactive intestinal peptide/VIP released from retinal neurons. May play an important role in plasma and tissue distribution of the structurally diverse chemotherapeutic drugs methotrexate and paclitaxel. Shows a pH-sensitive substrate specificity which may be ascribed to the protonation state of the binding site and leads to a stimulation of substrate transport in an acidic microenvironment. Hydrogencarbonate/HCO3(-) acts as the probable counteranion that exchanges for organic anions. May contribute to regulate the transport of organic compounds in testis across the blood-testis-barrier. This is Solute carrier organic anion transporter family member 1A2 (SLCO1A2) from Homo sapiens (Human).